Here is a 347-residue protein sequence, read N- to C-terminus: S-adenosylmethionine:tRNA ribosyltransferase-isomerase (347 aa).

The protein belongs to the QueA family. In terms of assembly, monomer.

The protein resides in the cytoplasm. The catalysed reaction is 7-aminomethyl-7-carbaguanosine(34) in tRNA + S-adenosyl-L-methionine = epoxyqueuosine(34) in tRNA + adenine + L-methionine + 2 H(+). The protein operates within tRNA modification; tRNA-queuosine biosynthesis. Functionally, transfers and isomerizes the ribose moiety from AdoMet to the 7-aminomethyl group of 7-deazaguanine (preQ1-tRNA) to give epoxyqueuosine (oQ-tRNA). This Exiguobacterium sibiricum (strain DSM 17290 / CCUG 55495 / CIP 109462 / JCM 13490 / 255-15) protein is S-adenosylmethionine:tRNA ribosyltransferase-isomerase.